The primary structure comprises 312 residues: Cytochrome c biogenesis protein CcsA (312 aa).

Helical transmembrane passes span 9 to 29 (ILTHISFSIVSIVITIHLITF), 44 to 64 (GIIVTFFCITGLLVTRWISSG), 71 to 91 (LYESLIFLSWSFSLIHIIPYF), 111 to 131 (GFATSGILTEIHQSGILVPAL), 143 to 163 (MILGYAALLCGSLLSVALLVI), 216 to 236 (VISLGFTFLTIGILSGAVWAN), 251 to 271 (WAFITWIVFAIYLHTRTNINL), and 277 to 297 (AIIATIGFLIIWICYFGVNLL).

Belongs to the CcmF/CycK/Ccl1/NrfE/CcsA family. In terms of assembly, may interact with Ccs1.

It is found in the plastid. The protein localises to the chloroplast thylakoid membrane. Its function is as follows. Required during biogenesis of c-type cytochromes (cytochrome c6 and cytochrome f) at the step of heme attachment. This chain is Cytochrome c biogenesis protein CcsA, found in Atropa belladonna (Belladonna).